We begin with the raw amino-acid sequence, 375 residues long: All-trans-retinol dehydrogenase [NAD(+)] ADH1B (375 aa).

At S2 the chain carries N-acetylserine. S23 carries the phosphoserine modification. A Phosphotyrosine modification is found at Y35. C47, H68, C98, C101, C104, C112, and C175 together coordinate Zn(2+). NAD(+) contacts are provided by residues 200–205, D224, K229, 293–295, and R370; these read GLGGVG and VGV.

This sequence belongs to the zinc-containing alcohol dehydrogenase family. As to quaternary structure, dimer of identical or non-identical chains of three types; alpha, beta and gamma. The cofactor is Zn(2+).

The protein resides in the cytoplasm. It catalyses the reaction all-trans-retinol + NAD(+) = all-trans-retinal + NADH + H(+). The catalysed reaction is all-trans-4-hydroxyretinol + NAD(+) = all-trans-4-hydroxyretinal + NADH + H(+). It carries out the reaction all-trans-4-oxoretinol + NAD(+) = all-trans-4-oxoretinal + NADH + H(+). Its function is as follows. Catalyzes the NAD-dependent oxidation of all-trans-retinol and its derivatives such as all-trans-4-hydroxyretinol and may participate in retinoid metabolism. In vitro can also catalyze the NADH-dependent reduction of all-trans-retinal and its derivatives such as all-trans-4-oxoretinal. Catalyzes in the oxidative direction with higher efficiency. Has the same affinity for all-trans-4-hydroxyretinol and all-trans-4-oxoretinal. The sequence is that of All-trans-retinol dehydrogenase [NAD(+)] ADH1B from Homo sapiens (Human).